We begin with the raw amino-acid sequence, 706 residues long: MMQESATETISNSSMNQNGMSTLSSQLDAGSRDGRSSSDTSSEVSTVELLHLQQQQALQAARQLLLQQQTSGLKSPKNNEKQRPLQVPVSMAMMTPQVITPQQMQQILQQQVLSPQQLQALLQQQQAVMLQQQQLQEFYKKQQEQLHLQLLQQQQQQQQQQQQQQQQQQQQQQQQQQQQQQQQQQQPQPHPGKQAKEQQQLAAQQLVFQQQLLQMQQLQQQQHLLNLQRQGLISIPPSQSALPVQSLPQAGLSPAEIQQLWKEVTGVHSMEDNGIKHGGLDLTTNISSSTTSTTTSKASPPITHHSLLNGQASVLSARRDSSSHEETGASHTLYGHGVCKWPGCENICEDFGQFLKHLNNEHALDDRSTAQCRVQMQVVQQLEIQLSKERERLQAMMTHLHMRPSEPKPSPKPLNLVSTVTMSKNMLETSPQSLPQTPTTPTAPVTPLAQGPSVITPASVPNVGAIRRRHSDKYNIPMSSEIAPNYEFYKNADVRPPFTYATLIRQAIMESSDRQLTLNEIYSWFTRTFAYFRRNAATWKNAVRHNLSLHKCFVRVENVKGAVWTVDEAEYQKRRSQKITASPTLVKNIPTSLGYGAALNASLQAALAESSLPLLSNTGLLNNASTGLLQAVHEDLNGSLDHIDSNGNSSAGCSPQPHIHSIHVKEEPLIADDEDCPMSLVTTANHSPELEEDRELEEEPLSEDLE.

Residues M1–D28 show a composition bias toward polar residues. 2 disordered regions span residues M1–S45 and I275–H305. Low complexity predominate over residues S287–S296. The C2H2-type zinc-finger motif lies at G337–H362. The tract at residues V379 to L400 is leucine-zipper. A ctbp1-binding region spans residues P413–V417. The fork-head DNA-binding region spans R495 to L585. The tract at residues D672–E706 is disordered. Acidic residues predominate over residues L690–E706.

Dimerization is required for DNA-binding. As to expression, at stage 15, expressed in the anterior/superior eye field and the caudal branchial arch. At later stages, expression persists in the retina and in the caudal branchial arch. Expressed in the pronephros and the tip of the tail. Beginning with stage 35, expression in the brain is localized to distinct subdomains of the anterior prosencephalon, the medial mesencephalon and to lateral domains of the hindbrain.

The protein resides in the nucleus. Transcriptional repressor. The sequence is that of Forkhead box protein P2 from Xenopus laevis (African clawed frog).